A 345-amino-acid chain; its full sequence is Biotin synthase (345 aa).

Positions 59-286 (NEVQLSTLLS…TTMVRLSAGR (228 aa)) constitute a Radical SAM core domain. Cys-74, Cys-78, and Cys-81 together coordinate [4Fe-4S] cluster. Cys-118, Cys-149, Cys-209, and Arg-281 together coordinate [2Fe-2S] cluster.

The protein belongs to the radical SAM superfamily. Biotin synthase family. Homodimer. [4Fe-4S] cluster serves as cofactor. The cofactor is [2Fe-2S] cluster.

It catalyses the reaction (4R,5S)-dethiobiotin + (sulfur carrier)-SH + 2 reduced [2Fe-2S]-[ferredoxin] + 2 S-adenosyl-L-methionine = (sulfur carrier)-H + biotin + 2 5'-deoxyadenosine + 2 L-methionine + 2 oxidized [2Fe-2S]-[ferredoxin]. It participates in cofactor biosynthesis; biotin biosynthesis; biotin from 7,8-diaminononanoate: step 2/2. Its function is as follows. Catalyzes the conversion of dethiobiotin (DTB) to biotin by the insertion of a sulfur atom into dethiobiotin via a radical-based mechanism. In Leptothrix cholodnii (strain ATCC 51168 / LMG 8142 / SP-6) (Leptothrix discophora (strain SP-6)), this protein is Biotin synthase.